The chain runs to 282 residues: Probable endonuclease 4 (282 aa).

The Zn(2+) site is built by histidine 66, histidine 106, glutamate 143, aspartate 177, histidine 180, histidine 214, aspartate 227, histidine 229, and glutamate 259.

This sequence belongs to the AP endonuclease 2 family. Requires Zn(2+) as cofactor.

The catalysed reaction is Endonucleolytic cleavage to 5'-phosphooligonucleotide end-products.. Functionally, endonuclease IV plays a role in DNA repair. It cleaves phosphodiester bonds at apurinic or apyrimidinic (AP) sites, generating a 3'-hydroxyl group and a 5'-terminal sugar phosphate. In Nitratidesulfovibrio vulgaris (strain ATCC 29579 / DSM 644 / CCUG 34227 / NCIMB 8303 / VKM B-1760 / Hildenborough) (Desulfovibrio vulgaris), this protein is Probable endonuclease 4.